A 59-amino-acid chain; its full sequence is Protein ORF5a (59 aa).

The helical; Signal-anchor for type III membrane protein transmembrane segment at 13–33 threads the bilayer; sequence VIYDCIAILALGCAITCLLLI.

Its subcellular location is the membrane. The chain is Protein ORF5a (GP5) from Equine arteritis virus (strain Bucyrus) (EAV).